Consider the following 310-residue polypeptide: Junctional adhesion molecule C (310 aa).

The signal sequence occupies residues 1–31; the sequence is MALSRRLRLRLCARLPDFFLLLLFRGCVIEA. The Extracellular portion of the chain corresponds to 32–241; the sequence is VNLKSSNRNP…GQDMEVYDLN (210 aa). Residues 35-127 form the Ig-like V-type domain; that stretch reads KSSNRNPVVH…VALNDRKEVD (93 aa). 2 disulfides stabilise this stretch: Cys53–Cys115 and Cys160–Cys219. Asn104 and Asn192 each carry an N-linked (GlcNAc...) asparagine glycan. The region spanning 139–236 is the Ig-like C2-type domain; that stretch reads PVAPVCRVPK…AARCEGQDME (98 aa). Residues 242 to 262 form a helical membrane-spanning segment; that stretch reads IAGIIGGVLVVLIVLAVITMG. The Cytoplasmic segment spans residues 263–310; it reads ICCAYRRGCFISSKQDGESYKSPGKHEGVNYIRTSEEGDFRHKSSFVI. Residues Cys264 and Cys265 are each lipidated (S-palmitoyl cysteine).

Belongs to the immunoglobulin superfamily. In terms of assembly, interacts with ITGAM. Interacts with GORASP2. Post-translationally, proteolytically cleaved from endothelial cells surface into a soluble form by ADAM10 and ADAM17; the release of soluble JAM3 is increased by pro-inflammatory factors. In terms of processing, S-palmitoylated by ZDHHC7. S-palmitoylation promotes expression at tight junctions.

It is found in the cell membrane. Its subcellular location is the cell junction. It localises to the desmosome. The protein localises to the tight junction. The protein resides in the secreted. In terms of biological role, junctional adhesion protein that mediates heterotypic cell-cell interactions with its cognate receptor JAM2 to regulate different cellular processes. Plays a role in homing and mobilization of hematopoietic stem and progenitor cells within the bone marrow. At the surface of bone marrow stromal cells, it contributes to the retention of the hematopoietic stem and progenitor cells expressing JAM3. Plays a central role in leukocytes extravasation by facilitating transmigration through the endothelium. Plays a role in spermatogenesis where JAM2 and JAM3, which are respectively expressed by Sertoli and germ cells, mediate an interaction between both cell types and play an essential role in the anchorage of germ cells onto Sertoli cells and the assembly of cell polarity complexes during spermatid differentiation. Also functions as a counter-receptor for ITGAM, mediating leukocyte-platelet interactions and is involved in the regulation of transepithelial migration of polymorphonuclear neutrophils (PMN). Plays a role in angiogenesis. Plays a role in the regulation of cell migration. During myogenesis, it is involved in myocyte fusion. Promotes chemotaxis of vascular endothelial cells and stimulates angiogenesis. In Rattus norvegicus (Rat), this protein is Junctional adhesion molecule C (Jam3).